The sequence spans 368 residues: MTEKARKRIVVAMSGGVDSSVTAALLKEEGHEVIGISMQVWDYSKFSAPEGEKFDTCCSLDDIHDARRVAEQIGIPFYVVNFEEEFQRLVIDDFVDEYFRGRTPNPCVRCNQRVKFELLLRKARELGADLLATGHYARIERGGDGLFHLLRGDDPGKDQSYFLFTLTQEQLARVTFPLGGMTKPEVRQLATRFGLRVAEKGESQEICFVPDNDYVRFLEDERGAGQLVGEIVDRAGTVLGHHEGTYRYTVGQRRGLGIAHPHPLYVVGVDAERRQVIVGPKEELLAPGLVATDVTWVIALATETLEAACKIRYRHHPVPCTVTVLAGNRAQVRFREPEKSVTPGQAVVFYHGDEVLGGGWIDAAMTEG.

Residues 12 to 19 and methionine 38 contribute to the ATP site; that span reads AMSGGVDS. The Nucleophile role is filled by cysteine 110. A disulfide bridge connects residues cysteine 110 and cysteine 207. Glycine 134 is a binding site for ATP. The tract at residues 157–159 is interaction with tRNA; the sequence is KDQ. Cysteine 207 functions as the Cysteine persulfide intermediate in the catalytic mechanism. The interval 312–313 is interaction with tRNA; sequence RY.

Belongs to the MnmA/TRMU family.

It localises to the cytoplasm. The catalysed reaction is S-sulfanyl-L-cysteinyl-[protein] + uridine(34) in tRNA + AH2 + ATP = 2-thiouridine(34) in tRNA + L-cysteinyl-[protein] + A + AMP + diphosphate + H(+). Functionally, catalyzes the 2-thiolation of uridine at the wobble position (U34) of tRNA, leading to the formation of s(2)U34. This is tRNA-specific 2-thiouridylase MnmA from Geobacter metallireducens (strain ATCC 53774 / DSM 7210 / GS-15).